The primary structure comprises 38 residues: Photosystem II reaction center protein L (38 aa).

The chain crosses the membrane as a helical span at residues 17-37; it reads SLYWGLLLIFVLAVPFSNYFF.

Belongs to the PsbL family. As to quaternary structure, PSII is composed of 1 copy each of membrane proteins PsbA, PsbB, PsbC, PsbD, PsbE, PsbF, PsbH, PsbI, PsbJ, PsbK, PsbL, PsbM, PsbT, PsbX, PsbY, PsbZ, Psb30/Ycf12, at least 3 peripheral proteins of the oxygen-evolving complex and a large number of cofactors. It forms dimeric complexes.

It is found in the plastid. The protein localises to the chloroplast thylakoid membrane. In terms of biological role, one of the components of the core complex of photosystem II (PSII). PSII is a light-driven water:plastoquinone oxidoreductase that uses light energy to abstract electrons from H(2)O, generating O(2) and a proton gradient subsequently used for ATP formation. It consists of a core antenna complex that captures photons, and an electron transfer chain that converts photonic excitation into a charge separation. This subunit is found at the monomer-monomer interface and is required for correct PSII assembly and/or dimerization. The chain is Photosystem II reaction center protein L from Pinus thunbergii (Japanese black pine).